Consider the following 364-residue polypeptide: DNA replication and repair protein RecF (364 aa).

30 to 37 (GDNGAGKT) contributes to the ATP binding site.

This sequence belongs to the RecF family.

It is found in the cytoplasm. Functionally, the RecF protein is involved in DNA metabolism; it is required for DNA replication and normal SOS inducibility. RecF binds preferentially to single-stranded, linear DNA. It also seems to bind ATP. The protein is DNA replication and repair protein RecF of Stenotrophomonas maltophilia (strain R551-3).